The chain runs to 521 residues: Citrinin biosynthesis cluster MFS transporter ctnC (521 aa).

A disordered region spans residues 1–29 (MKEEIDAPVSTDASGTDLENARDQPSGEK). 8 helical membrane-spanning segments follow: residues 58 to 78 (SLIT…SSVF), 95 to 115 (VMTL…LVWG), 124 to 144 (LKPL…VAVA), 155 to 175 (FFLG…LADF), 182 to 202 (AIAI…GPIM), 237 to 257 (WTAW…FLTL), 313 to 333 (ILVC…LFFV), and 349 to 369 (GIAA…CLLV). N-linked (GlcNAc...) asparagine glycosylation occurs at Asn383. 4 helical membrane-spanning segments follow: residues 392–412 (LPPM…FGWT), 417–437 (ISWA…LMIW), 465–485 (AVSA…GVDW), and 489–509 (LLGF…FYGA).

It belongs to the major facilitator superfamily. CAR1 family.

The protein resides in the membrane. MFS transporter; part of the gene cluster that mediates the biosynthesis the mycotoxin citrinin, a hepato-nephrotoxic compound to humans due to inhibition of respiration complex III. This Monascus purpureus (Red mold) protein is Citrinin biosynthesis cluster MFS transporter ctnC (ctnC).